A 629-amino-acid chain; its full sequence is tRNA uridine 5-carboxymethylaminomethyl modification enzyme MnmG (629 aa).

FAD-binding positions include 13–18 (GGGHAG), Val125, and Ser180. An NAD(+)-binding site is contributed by 273–287 (GPRYCPSIEDKVMRF). Residue Gln370 coordinates FAD.

This sequence belongs to the MnmG family. Homodimer. Heterotetramer of two MnmE and two MnmG subunits. The cofactor is FAD.

The protein resides in the cytoplasm. Its function is as follows. NAD-binding protein involved in the addition of a carboxymethylaminomethyl (cmnm) group at the wobble position (U34) of certain tRNAs, forming tRNA-cmnm(5)s(2)U34. The chain is tRNA uridine 5-carboxymethylaminomethyl modification enzyme MnmG from Pasteurella multocida (strain Pm70).